Consider the following 454-residue polypeptide: UPF0210 protein Cphy_2797 (454 aa).

The protein belongs to the UPF0210 family. In terms of assembly, homodimer.

The protein is UPF0210 protein Cphy_2797 of Lachnoclostridium phytofermentans (strain ATCC 700394 / DSM 18823 / ISDg) (Clostridium phytofermentans).